Consider the following 212-residue polypeptide: MNHRRSSIVLLILSILSPVTLSIRYELLSGHTKCISEEIHANAMTIGKYSIINPHEDHPLPSSHKVTVRVTSPQGTAYHESDGVESGQFSFVAVETGDYISCFSAVDHKPETTLIIDFDWRTGIHTKDWSNVAKKSQVETMEFEVKKLFETVNGIHDEMFYLRDREEEMHNLNIATNSKMAWLSFVSLAVCLSVAGLQFWHLKTFFQKKKLI.

Positions 1–22 (MNHRRSSIVLLILSILSPVTLS) are cleaved as a signal peptide. The Lumenal portion of the chain corresponds to 23–179 (IRYELLSGHT…HNLNIATNSK (157 aa)). The 116-residue stretch at 32–147 (TKCISEEIHA…VETMEFEVKK (116 aa)) folds into the GOLD domain. Positions 162-175 (LRDREEEMHNLNIA) form a coiled coil. Position 165 is an omega-N-methylated arginine (R165). A helical transmembrane segment spans residues 180–200 (MAWLSFVSLAVCLSVAGLQFW). Topologically, residues 201–212 (HLKTFFQKKKLI) are cytoplasmic. The short motif at 205-206 (FF) is the COPII vesicle coat-binding element. The short motif at 205 to 212 (FFQKKKLI) is the COPI vesicle coat-binding element.

The protein belongs to the EMP24/GP25L family. In terms of assembly, probably oligomerizes with other members of the EMP24/GP25L family. Associates with the COPI vesicle coat (coatomer). Associates with the COPII vesicle coat (coatomer).

It is found in the endoplasmic reticulum membrane. The protein localises to the golgi apparatus. Its subcellular location is the cis-Golgi network membrane. It localises to the golgi stack membrane. Involved in vesicular protein trafficking. Mainly functions in the early secretory pathway. Thought to act as cargo receptor at the lumenal side for incorporation of secretory cargo molecules into transport vesicles and to be involved in vesicle coat formation at the cytoplasmic side. This chain is Transmembrane emp24 domain-containing protein p24delta7, found in Arabidopsis thaliana (Mouse-ear cress).